The following is a 39-amino-acid chain: Potassium channel toxin alpha-KTx 2.17 (39 aa).

Disulfide bonds link Cys-7/Cys-29, Cys-13/Cys-34, and Cys-17/Cys-36. Ile-39 bears the Isoleucine amide mark.

The protein belongs to the short scorpion toxin superfamily. Potassium channel inhibitor family. Alpha-KTx 02 subfamily. In terms of tissue distribution, expressed by the venom gland.

It localises to the secreted. Functionally, blocks human voltage-gated potassium channels Kv1.1/KCNA1 (IC(50)=4.8 nM) and Kv1.2/KCNA2 (IC(50)=2.9 nM). The protein is Potassium channel toxin alpha-KTx 2.17 of Centruroides tecomanus (Scorpion).